The following is a 404-amino-acid chain: MPDIKRVVLAYSGGLDTSVIAKWLEVERGLEVVTFTADLGQGEELEPARAKAQAMGIPDKHIFIEDLREEFVRDYVFPMMRANARYEGDYLLGTSIARPLISKRLVEIAQETGADAIAHGATGKGNDQVRFELSAYALDPDIKVIAPWREWDLTSRTALIAWAEKHQIQVPKDKRGESPFSTDANLLHTSSEGKVLEDPWEETPDYVYSRTVNPEDAPDEPEFITIDFERGDGIALNGEAMSPANLLTALNELGRKHGIGRLDLVENRFVGMKSRGMYETPGGEIYARAHRGIEQITLDRGAAHLKDELMPKYAELIYNGFWFSPEREMLQAAIDLSQDKVSGTVRLKLYKGNADVVGRKSPNSLYSEAHVTFEDDAGAYDQSDAEGFIRLNALRLKLLGKRDR.

Residues 10 to 18 (AYSGGLDTS) and Ala37 contribute to the ATP site. 2 residues coordinate L-citrulline: Tyr90 and Ser95. Gly120 lines the ATP pocket. L-aspartate is bound by residues Thr122, Asn126, and Asp127. Asn126 lines the L-citrulline pocket. L-citrulline contacts are provided by Arg130, Ser181, Ser190, Glu266, and Tyr278.

Belongs to the argininosuccinate synthase family. Type 1 subfamily. In terms of assembly, homotetramer.

The protein localises to the cytoplasm. It carries out the reaction L-citrulline + L-aspartate + ATP = 2-(N(omega)-L-arginino)succinate + AMP + diphosphate + H(+). It functions in the pathway amino-acid biosynthesis; L-arginine biosynthesis; L-arginine from L-ornithine and carbamoyl phosphate: step 2/3. The sequence is that of Argininosuccinate synthase from Erythrobacter litoralis (strain HTCC2594).